The following is a 135-amino-acid chain: Flagellar assembly factor FliW 1 (135 aa).

It belongs to the FliW family. As to quaternary structure, interacts with translational regulator CsrA and flagellin(s).

The protein resides in the cytoplasm. In terms of biological role, acts as an anti-CsrA protein, binds CsrA and prevents it from repressing translation of its target genes, one of which is flagellin. Binds to flagellin and participates in the assembly of the flagellum. This Helicobacter pylori (strain ATCC 700392 / 26695) (Campylobacter pylori) protein is Flagellar assembly factor FliW 1.